The following is a 403-amino-acid chain: Ribosomal RNA large subunit methyltransferase I (403 aa).

In terms of domain architecture, PUA spans 9-88 (YPRLVLSKGR…ESIDIAFFTR (80 aa)).

The protein belongs to the methyltransferase superfamily. RlmI family.

Its subcellular location is the cytoplasm. The enzyme catalyses cytidine(1962) in 23S rRNA + S-adenosyl-L-methionine = 5-methylcytidine(1962) in 23S rRNA + S-adenosyl-L-homocysteine + H(+). Specifically methylates the cytosine at position 1962 (m5C1962) of 23S rRNA. The protein is Ribosomal RNA large subunit methyltransferase I of Salmonella newport (strain SL254).